The chain runs to 249 residues: MSKFEVTHLNLFYGENHALKDISIDIPARQVTALIGPSGCGKSSLLRTLNRMNDLVEGVKITGTVTFDGDDIYANIDVKHLRMSVGMVFQKPNPFPMSIYENIAFGLKAQGVKDKAVLDAVVENSLRGAALWEEVKTRLHTPAFGLSGGQQQRLCIARAIAMEPEVILMDEPTSALDPIATHKIEELMDELRKKFTIVIVTHSMNQAKRISDKTAFFWMGELVEHGDTEQIFNNPKDHRTQGYVSGHFG.

The ABC transporter domain occupies 4–244 (FEVTHLNLFY…PKDHRTQGYV (241 aa)). 36-43 (GPSGCGKS) contacts ATP.

This sequence belongs to the ABC transporter superfamily. Phosphate importer (TC 3.A.1.7) family. In terms of assembly, the complex is composed of two ATP-binding proteins (PstB), two transmembrane proteins (PstC and PstA) and a solute-binding protein (PstS).

It is found in the cell inner membrane. The catalysed reaction is phosphate(out) + ATP + H2O = ADP + 2 phosphate(in) + H(+). In terms of biological role, part of the ABC transporter complex PstSACB involved in phosphate import. Responsible for energy coupling to the transport system. This chain is Phosphate import ATP-binding protein PstB 2, found in Shewanella oneidensis (strain ATCC 700550 / JCM 31522 / CIP 106686 / LMG 19005 / NCIMB 14063 / MR-1).